We begin with the raw amino-acid sequence, 81 residues long: Antimicrobial peptide D1 (81 aa).

The signal sequence occupies residues 1–31 (MAKTVLGIHVTFLTLLFAVLLLNDVMYTPVE). 4 disulfides stabilise this stretch: Cys-34/Cys-81, Cys-45/Cys-66, Cys-51/Cys-75, and Cys-55/Cys-77.

Its function is as follows. Antimicrobial peptide probably active against fungi like B.sorokiniana, F.oxysporum, F.graminearum, F.avenaceum, B.cinerea, P.beta, P.infestans and P.debaryanum. This Stellaria media (Common chickweed) protein is Antimicrobial peptide D1.